Here is a 227-residue protein sequence, read N- to C-terminus: Small ribosomal subunit protein uS3 (227 aa).

Residues L38–R106 enclose the KH type-2 domain.

Belongs to the universal ribosomal protein uS3 family. Part of the 30S ribosomal subunit. Forms a tight complex with proteins S10 and S14.

In terms of biological role, binds the lower part of the 30S subunit head. Binds mRNA in the 70S ribosome, positioning it for translation. This is Small ribosomal subunit protein uS3 from Syntrophomonas wolfei subsp. wolfei (strain DSM 2245B / Goettingen).